The following is a 42-amino-acid chain: Photosystem II reaction center protein J (42 aa).

Residues 12 to 32 (LWFVGMIVGLAALGLLGIFFY) form a helical membrane-spanning segment.

Belongs to the PsbJ family. As to quaternary structure, PSII is composed of 1 copy each of membrane proteins PsbA, PsbB, PsbC, PsbD, PsbE, PsbF, PsbH, PsbI, PsbJ, PsbK, PsbL, PsbM, PsbT, PsbX, PsbY, PsbZ, Psb30/Ycf12, at least 3 peripheral proteins of the oxygen-evolving complex and a large number of cofactors. It forms dimeric complexes.

It localises to the plastid. Its subcellular location is the chloroplast thylakoid membrane. Its function is as follows. One of the components of the core complex of photosystem II (PSII). PSII is a light-driven water:plastoquinone oxidoreductase that uses light energy to abstract electrons from H(2)O, generating O(2) and a proton gradient subsequently used for ATP formation. It consists of a core antenna complex that captures photons, and an electron transfer chain that converts photonic excitation into a charge separation. This is Photosystem II reaction center protein J from Nephroselmis olivacea (Green alga).